Reading from the N-terminus, the 287-residue chain is MLLKGAPAADHILATIKENIRACSKAPGLAVVLIGNNPASEIYVNMKIKRATDLGMVSKSYRKPSDATLSDILALIHQLNNDENIHGILVQLPLPKHLDAQAILSTITPDKDVDGLHPVNVGKLLLGETDGFIPCTPAGIVELCKYYEIPLHGKHVVILGRSNIVGKPLAALLMQRHADTNASVTLLHSQSEHLTEITRTADILISAIGVPLFVNKEMIAEKTVIMDVGTSRIPAANPKGYILVGDVDFNNVVPVCRAITPVPGGVGPMTVAMLMRNTWESFLRHTS.

NADP(+)-binding positions include 160–162 (GRS), serine 189, and threonine 230.

This sequence belongs to the tetrahydrofolate dehydrogenase/cyclohydrolase family. As to quaternary structure, homodimer.

It catalyses the reaction (6R)-5,10-methylene-5,6,7,8-tetrahydrofolate + NADP(+) = (6R)-5,10-methenyltetrahydrofolate + NADPH. It carries out the reaction (6R)-5,10-methenyltetrahydrofolate + H2O = (6R)-10-formyltetrahydrofolate + H(+). It functions in the pathway one-carbon metabolism; tetrahydrofolate interconversion. In terms of biological role, catalyzes the oxidation of 5,10-methylenetetrahydrofolate to 5,10-methenyltetrahydrofolate and then the hydrolysis of 5,10-methenyltetrahydrofolate to 10-formyltetrahydrofolate. This is Bifunctional protein FolD from Chlamydia trachomatis serovar D (strain ATCC VR-885 / DSM 19411 / UW-3/Cx).